The primary structure comprises 309 residues: Metaxin-3 (309 aa).

The segment at 274-309 is disordered; sequence MDDNLRRSPQNRPQKLSTLKPVGGAENSHSSDLLSH. Composition is skewed to polar residues over residues 280–290 and 300–309; these read RSPQNRPQKLS and NSHSSDLLSH.

This sequence belongs to the metaxin family. As to quaternary structure, part of a large protein complex spanning both mitochondrial membranes termed the mitochondrial intermembrane space bridging (MIB) complex.

It localises to the mitochondrion. The protein localises to the mitochondrion outer membrane. Its function is as follows. Could function in transport of proteins into the mitochondrion. The polypeptide is Metaxin-3 (mtx3) (Xenopus laevis (African clawed frog)).